We begin with the raw amino-acid sequence, 163 residues long: Dual specificity phosphatase 28 (163 aa).

The 142-residue stretch at 10 to 151 (PFARVAPALF…LQKYEQTLQA (142 aa)) folds into the Tyrosine-protein phosphatase domain. The active-site Phosphocysteine intermediate is the cysteine 95.

It belongs to the protein-tyrosine phosphatase family. Non-receptor class dual specificity subfamily. Monomer.

It catalyses the reaction O-phospho-L-tyrosyl-[protein] + H2O = L-tyrosyl-[protein] + phosphate. It carries out the reaction O-phospho-L-seryl-[protein] + H2O = L-seryl-[protein] + phosphate. The enzyme catalyses O-phospho-L-threonyl-[protein] + H2O = L-threonyl-[protein] + phosphate. Has phosphatase activity with the synthetic substrate 6,8-difluoro-4-methylumbelliferyl phosphate (in vitro). Has almost no detectable activity with phosphotyrosine, even less activity with phosphothreonine and displays complete lack of activity with phosphoserine. The poor activity with phosphotyrosine may be due to steric hindrance by bulky amino acid sidechains that obstruct access to the active site. In Mus musculus (Mouse), this protein is Dual specificity phosphatase 28 (Dusp28).